The following is a 581-amino-acid chain: Chaperonin GroEL 1 (581 aa).

ATP is bound by residues 29–32 (TIGP), 86–90 (DGTTT), Gly-413, and Asp-492.

Belongs to the chaperonin (HSP60) family. As to quaternary structure, forms a cylinder of 14 subunits composed of two heptameric rings stacked back-to-back. Interacts with the co-chaperonin GroES.

The protein localises to the cytoplasm. The catalysed reaction is ATP + H2O + a folded polypeptide = ADP + phosphate + an unfolded polypeptide.. In terms of biological role, together with its co-chaperonin GroES, plays an essential role in assisting protein folding. The GroEL-GroES system forms a nano-cage that allows encapsulation of the non-native substrate proteins and provides a physical environment optimized to promote and accelerate protein folding. The sequence is that of Chaperonin GroEL 1 from Prochlorococcus marinus subsp. pastoris (strain CCMP1986 / NIES-2087 / MED4).